We begin with the raw amino-acid sequence, 387 residues long: Protein mab-21-like 3 (387 aa).

This sequence belongs to the mab-21 family.

In Danio rerio (Zebrafish), this protein is Protein mab-21-like 3 (mab21L3).